The chain runs to 237 residues: Ribonuclease 3 (237 aa).

In terms of domain architecture, RNase III spans 7-135 (IKEVEAKLKF…ILGAVYLDGG (129 aa)). E48 lines the Mg(2+) pocket. Residue D52 is part of the active site. Residues N121 and E124 each coordinate Mg(2+). E124 is an active-site residue. Residues 160–229 (NPKNRLQQLT…AQEALDANDY (70 aa)) form the DRBM domain.

Belongs to the ribonuclease III family. In terms of assembly, homodimer. Mg(2+) serves as cofactor.

The protein resides in the cytoplasm. The catalysed reaction is Endonucleolytic cleavage to 5'-phosphomonoester.. Digests double-stranded RNA. Involved in the processing of primary rRNA transcript to yield the immediate precursors to the large and small rRNAs (23S and 16S). Processes some mRNAs, and tRNAs when they are encoded in the rRNA operon. Processes pre-crRNA and tracrRNA of type II CRISPR loci if present in the organism. The protein is Ribonuclease 3 of Chlamydia felis (strain Fe/C-56) (Chlamydophila felis).